Consider the following 487-residue polypeptide: Protein nucleotidyltransferase YdiU (487 aa).

8 residues coordinate ATP: G85, G87, R88, K108, D120, G121, R171, and R178. Residue D247 is the Proton acceptor of the active site. N248 and D257 together coordinate Mg(2+). D257 serves as a coordination point for ATP.

Belongs to the SELO family. It depends on Mg(2+) as a cofactor. Mn(2+) is required as a cofactor.

It carries out the reaction L-seryl-[protein] + ATP = 3-O-(5'-adenylyl)-L-seryl-[protein] + diphosphate. The catalysed reaction is L-threonyl-[protein] + ATP = 3-O-(5'-adenylyl)-L-threonyl-[protein] + diphosphate. The enzyme catalyses L-tyrosyl-[protein] + ATP = O-(5'-adenylyl)-L-tyrosyl-[protein] + diphosphate. It catalyses the reaction L-histidyl-[protein] + UTP = N(tele)-(5'-uridylyl)-L-histidyl-[protein] + diphosphate. It carries out the reaction L-seryl-[protein] + UTP = O-(5'-uridylyl)-L-seryl-[protein] + diphosphate. The catalysed reaction is L-tyrosyl-[protein] + UTP = O-(5'-uridylyl)-L-tyrosyl-[protein] + diphosphate. Its function is as follows. Nucleotidyltransferase involved in the post-translational modification of proteins. It can catalyze the addition of adenosine monophosphate (AMP) or uridine monophosphate (UMP) to a protein, resulting in modifications known as AMPylation and UMPylation. This Agrobacterium fabrum (strain C58 / ATCC 33970) (Agrobacterium tumefaciens (strain C58)) protein is Protein nucleotidyltransferase YdiU.